A 204-amino-acid polypeptide reads, in one-letter code: Pyrrolidone-carboxylate peptidase (204 aa).

Residues E78, C141, and H165 contribute to the active site.

It belongs to the peptidase C15 family. As to quaternary structure, homotetramer.

It is found in the cytoplasm. It catalyses the reaction Release of an N-terminal pyroglutamyl group from a polypeptide, the second amino acid generally not being Pro.. In terms of biological role, removes 5-oxoproline from various penultimate amino acid residues except L-proline. This Levilactobacillus brevis (strain ATCC 367 / BCRC 12310 / CIP 105137 / JCM 1170 / LMG 11437 / NCIMB 947 / NCTC 947) (Lactobacillus brevis) protein is Pyrrolidone-carboxylate peptidase.